A 538-amino-acid chain; its full sequence is MFRRNLITSAILLMAPLAFSAQSLAESLTVEQRLELLEKALRETQSELKKYKDEEKKKYTPATVNRSVSTNDQGYAANPFPTSSAAKPDAVLVKNEEKNASETGSIYSSMTLKDFSKFVKDEIGFSYNGYYRSGWGTASHGSPKSWAIGSLGRFGNEYSGWFDLQLKQRVYNENGKRVDAVVMIDGNVGQQYSTGWFGDNAGGENFMQFSDMYVTTKGFLPFAPEADFWVGKHGAPKIEIQMLDWKTQRTDAVTGVGLENWKVGPGKIDIALVREDVDDYDRSLQNKQQINTHTIDLRYKDIPLWDKATLMVSGRYVTANESASEKDNQDNNGYYDWKDTWMFGTSLTQKFDKGGFNEFSFLVANNSIARNFGRYAGASPFTTFNGRYYCDHTGGTAVRLTSQGEAYIGDHFIVANAIVYSFGNDIYSYETGAHSDFESIRAVVRPAYIWDQYNQTGVELGYFTQQNKDANSNKFNESGYKTTLFHTFKVNTSMLTSRLEIRFYATYIKALENELDGFTFEDNKDDQFAVGAQAEIWW.

A signal peptide spans 1-25 (MFRRNLITSAILLMAPLAFSAQSLA). Positions 52 to 82 (KDEEKKKYTPATVNRSVSTNDQGYAANPFPT) are disordered. The span at 62 to 73 (ATVNRSVSTNDQ) shows a compositional bias: polar residues.

It belongs to the porin LamB (TC 1.B.3) family.

The protein resides in the cell outer membrane. In terms of biological role, may be a sugar porin with a broad carbohydrate specificity. This chain is Putative outer membrane porin BglH (bglH), found in Shigella flexneri serotype 5b (strain 8401).